The following is a 122-amino-acid chain: Secretion system apparatus protein SsaM (122 aa).

In Salmonella typhimurium (strain LT2 / SGSC1412 / ATCC 700720), this protein is Secretion system apparatus protein SsaM (ssaM).